The following is a 98-amino-acid chain: NADH-ubiquinone oxidoreductase chain 4L (98 aa).

A run of 3 helical transmembrane segments spans residues M1–M21, A29–L49, and I61–V81.

It belongs to the complex I subunit 4L family. Core subunit of respiratory chain NADH dehydrogenase (Complex I) which is composed of 45 different subunits.

It localises to the mitochondrion inner membrane. It carries out the reaction a ubiquinone + NADH + 5 H(+)(in) = a ubiquinol + NAD(+) + 4 H(+)(out). In terms of biological role, core subunit of the mitochondrial membrane respiratory chain NADH dehydrogenase (Complex I) which catalyzes electron transfer from NADH through the respiratory chain, using ubiquinone as an electron acceptor. Part of the enzyme membrane arm which is embedded in the lipid bilayer and involved in proton translocation. This chain is NADH-ubiquinone oxidoreductase chain 4L (MT-ND4L), found in Balaenoptera borealis (Sei whale).